The primary structure comprises 23 residues: U1-poneritoxin-Da3b (23 aa).

Belongs to the non-disulfide-bridged peptide (NDBP) superfamily. Medium-length antimicrobial peptide (group 3) family. Ponericin-W subfamily. As to expression, expressed by the venom gland.

The protein resides in the secreted. The protein localises to the target cell membrane. May have antimicrobial properties, like most ant linear peptides. May act by disrupting the integrity of the bacterial cell membrane. This Dinoponera australis (Giant neotropical hunting ant) protein is U1-poneritoxin-Da3b.